Here is a 352-residue protein sequence, read N- to C-terminus: Histidinol-phosphate aminotransferase (352 aa).

An N6-(pyridoxal phosphate)lysine modification is found at Lys-221.

Belongs to the class-II pyridoxal-phosphate-dependent aminotransferase family. Histidinol-phosphate aminotransferase subfamily. In terms of assembly, homodimer. Pyridoxal 5'-phosphate serves as cofactor.

The catalysed reaction is L-histidinol phosphate + 2-oxoglutarate = 3-(imidazol-4-yl)-2-oxopropyl phosphate + L-glutamate. It functions in the pathway amino-acid biosynthesis; L-histidine biosynthesis; L-histidine from 5-phospho-alpha-D-ribose 1-diphosphate: step 7/9. This chain is Histidinol-phosphate aminotransferase, found in Staphylococcus aureus (strain MSSA476).